The primary structure comprises 1022 residues: MLPYQAAVAMDYAGYQRQPTPGHPGSHMATMGSLGMPAVPFTHSWMVPTQDLCAMPPYNKMTGHQQPPGAGMHAQQQPLEPGILELRKEKSRDAARSRRGKENYEFYELAKMLPLPAAITSQLDKASIIRLTISYLKLRDFSGHGDPPWTREASSSSKLKSAAIRRSPAVDLFEQHQGTHILQSLDGFALAVAADGRFLYISETVSIYLGLSQVEMTGSSIFDYIHQADHSEIADQLGLSLTSGGGGGGGSSSSGGGGGGAGGGMASPTSGASDDGSGTHGTNNPDVAASMTQASTSGYKGYDRSFCVRMKSTLTKRGCHFKSSGYRASDATSNCNNGNNASNNAKNVKNPGSNYSVVLLLCKLRPQYTFSHSRKSQPPLLGMVALAIALPPPSVHEIRLECDMFVTRVNFDLRVAHCEPRVSDLLDYSPEDLVNKSLYSLCHAEDANRLRKSHSDLIEKGQVLTGYYRLMNKSGGYTWLQTCATVVCSTKNADEQNIICVNYVISNRENENMILDCCQLEPSPDSIKHEEGLGNDKSSGSPGGDASGEGNSHLSAGDMKLNSPKTDSEGHSHRGRGRSAAASHGSSMNSLTMIKDSPTPLGVEIDSGVLPTTVATPVPAATPPVQSTKRKRKTKASQHAEDQGQEQVISEQPLPKLPTMEQRDQQPRSRLPSIVDEQPSSAADSAVKDLEQAMSKHLPSPAAVVSVAPPNTDFSADSLLKQQQQQQQLDPNEKSSTIQWIGTPYQQPPAPMPATALLRQLYANRESVIRATARQTPTGVGPGVFYGDQQTGPLPTPPGSESSYENQYLQLHSAASGGHPGGQKTSADAFTNLVSTYGGYHSSIDYHNAMTPPSSVSPRDSNQPGKAAPVLASNGGYDYAPDPLRGQYATSSGDVVPATLPLKPQASYTATMHPSGSTTTEGGVTYSNLDQPQYFAPHSSFHLYHKGSPASGWYSTPSXVVDDQGQVPPSCQDQYHHHHHHHHHQDGSAGSSASQASERWDFVGALGKVARMFFSARKGNPG.

The bHLH domain occupies 86–139 (LRKEKSRDAARSRRGKENYEFYELAKMLPLPAAITSQLDKASIIRLTISYLKLR). Positions 174–244 (EQHQGTHILQ…DQLGLSLTSG (71 aa)) constitute a PAS 1 domain. Residues 239-289 (LSLTSGGGGGGGSSSSGGGGGGAGGGMASPTSGASDDGSGTHGTNNPDVAA) are disordered. Residues 243 to 265 (SGGGGGGGSSSSGGGGGGAGGGM) are compositionally biased toward gly residues. Polar residues predominate over residues 280-289 (HGTNNPDVAA). The PAS 2 domain maps to 391 to 461 (PPPSVHEIRL…KSHSDLIEKG (71 aa)). Residues 465–508 (TGYYRLMNKSGGYTWLQTCATVVCSTKNADEQNIICVNYVISNR) form the PAC domain. Disordered stretches follow at residues 525–686 (DSIK…ADSA), 849–896 (AMTP…GDVV), and 962–996 (DDQG…ASQA). 2 stretches are compositionally biased toward low complexity: residues 578 to 587 (RSAAASHGSS) and 611 to 625 (PTTV…TPPV). Residues 629 to 636 (KRKRKTKA) carry the Nuclear localization signal motif. S673 carries the post-translational modification Phosphoserine; by PKB/Akt1. A compositionally biased stretch (polar residues) spans 851–864 (TPPSSVSPRDSNQP). A compositionally biased stretch (low complexity) spans 987-996 (GSAGSSASQA).

In terms of assembly, efficient DNA binding requires dimerization with another bHLH protein. Heterodimer with tgo. Ser-673 phosphorylation by PKB/Akt1 is required for nuclear targeting and transcriptional activity. As to expression, trachea, salivary gland ducts, posterior spiracles (Filzkoeper primordia) and a subset of cells in the CNS.

The protein resides in the nucleus. Transcription factor, master regulator of tracheal cell fates in the embryo, necessary for the development of the salivary gland duct, Malpighian tubules and the posterior spiracles. It may induce a general fate of branched tubular structures of epithelial origin. Functions with tgo to regulate expression of btl. This Drosophila melanogaster (Fruit fly) protein is Protein trachealess (trh).